Reading from the N-terminus, the 148-residue chain is Lysozyme C (148 aa).

Residues M1–G18 form the signal peptide. One can recognise a C-type lysozyme domain in the interval K19 to V148. Cystine bridges form between C24/C146, C48/C134, C83/C99, and C95/C113. Catalysis depends on residues E53 and D71.

The protein belongs to the glycosyl hydrolase 22 family. Monomer.

It catalyses the reaction Hydrolysis of (1-&gt;4)-beta-linkages between N-acetylmuramic acid and N-acetyl-D-glucosamine residues in a peptidoglycan and between N-acetyl-D-glucosamine residues in chitodextrins.. Its function is as follows. Lysozymes have primarily a bacteriolytic function; those in tissues and body fluids are associated with the monocyte-macrophage system and enhance the activity of immunoagents. This is Lysozyme C (LYZ) from Erythrocebus patas (Red guenon).